The sequence spans 211 residues: Pyridoxine/pyridoxamine 5'-phosphate oxidase (211 aa).

Substrate-binding positions include 8–11 and lysine 66; that span reads RRDY. FMN is bound by residues 61–66, 76–77, arginine 82, lysine 83, and glutamine 105; these read RLVLLK and FT. Residues tyrosine 123, arginine 127, and serine 131 each contribute to the substrate site. FMN contacts are provided by residues 140 to 141 and tryptophan 184; that span reads QS. 190-192 contributes to the substrate binding site; the sequence is RLH. Residue arginine 194 coordinates FMN.

It belongs to the pyridoxamine 5'-phosphate oxidase family. Homodimer. Requires FMN as cofactor.

It catalyses the reaction pyridoxamine 5'-phosphate + O2 + H2O = pyridoxal 5'-phosphate + H2O2 + NH4(+). It carries out the reaction pyridoxine 5'-phosphate + O2 = pyridoxal 5'-phosphate + H2O2. The protein operates within cofactor metabolism; pyridoxal 5'-phosphate salvage; pyridoxal 5'-phosphate from pyridoxamine 5'-phosphate: step 1/1. Its pathway is cofactor metabolism; pyridoxal 5'-phosphate salvage; pyridoxal 5'-phosphate from pyridoxine 5'-phosphate: step 1/1. Catalyzes the oxidation of either pyridoxine 5'-phosphate (PNP) or pyridoxamine 5'-phosphate (PMP) into pyridoxal 5'-phosphate (PLP). The polypeptide is Pyridoxine/pyridoxamine 5'-phosphate oxidase (Thermosynechococcus vestitus (strain NIES-2133 / IAM M-273 / BP-1)).